The following is a 516-amino-acid chain: Apolipoprotein N-acyltransferase (516 aa).

The next 5 membrane-spanning stretches (helical) occupy residues 23-43 (ILIL…AFAP), 68-88 (AFWL…RWIY), 94-114 (VAGL…AYLA), 135-155 (WLLA…WVMT), and 178-198 (LGGI…LAML). In terms of domain architecture, CN hydrolase spans 241 to 481 (AQGNIAQELK…VLTGFAQSRQ (241 aa)). Glu-279 (proton acceptor) is an active-site residue. The active site involves Lys-339. The active-site Nucleophile is Cys-391. Residues 489-509 (FGNLPVVLGCGALLLLALLLG) form a helical membrane-spanning segment.

It belongs to the CN hydrolase family. Apolipoprotein N-acyltransferase subfamily.

Its subcellular location is the cell inner membrane. The catalysed reaction is N-terminal S-1,2-diacyl-sn-glyceryl-L-cysteinyl-[lipoprotein] + a glycerophospholipid = N-acyl-S-1,2-diacyl-sn-glyceryl-L-cysteinyl-[lipoprotein] + a 2-acyl-sn-glycero-3-phospholipid + H(+). The protein operates within protein modification; lipoprotein biosynthesis (N-acyl transfer). In terms of biological role, catalyzes the phospholipid dependent N-acylation of the N-terminal cysteine of apolipoprotein, the last step in lipoprotein maturation. The protein is Apolipoprotein N-acyltransferase of Chromobacterium violaceum (strain ATCC 12472 / DSM 30191 / JCM 1249 / CCUG 213 / NBRC 12614 / NCIMB 9131 / NCTC 9757 / MK).